Reading from the N-terminus, the 229-residue chain is B-cell antigen receptor complex-associated protein beta chain (229 aa).

An N-terminal signal peptide occupies residues 1-28 (MARLALSPVPSHWMVALLLLLSAEPVPA). The Extracellular portion of the chain corresponds to 29–159 (ARSEDRYRNP…QLKQRNTLKD (131 aa)). The 101-residue stretch at 38-138 (PKGSACSRIW…TSEVYQGCGT (101 aa)) folds into the Ig-like V-type domain. 2 cysteine pairs are disulfide-bonded: Cys43–Cys126 and Cys65–Cys122. N-linked (GlcNAc...) asparagine glycosylation is found at Asn73, Asn101, Asn127, and Asn128. A helical transmembrane segment spans residues 160–180 (GIIMIQTLLIILFIIVPIFLL). Topologically, residues 181-229 (LDKDDSKAGMEEDHTYEGLDIDQTATYEDIVTLRTGEVKWSVGEHPGQE) are cytoplasmic. The ITAM domain occupies 185-213 (DSKAGMEEDHTYEGLDIDQTATYEDIVTL). 2 positions are modified to phosphotyrosine; by SRC-type Tyr-kinases: Tyr196 and Tyr207.

Heterodimer of alpha and beta chains; disulfide-linked. Part of the B-cell antigen receptor complex where the alpha/beta chain heterodimer is non-covalently associated with an antigen-specific membrane-bound surface immunoglobulin of two heavy chains and two light chains. Interacts with LYN. Post-translationally, phosphorylated on tyrosine upon B-cell activation by SRC-type Tyr-kinases such as BLK, LYN and SYK. In terms of tissue distribution, B-cells.

Its subcellular location is the cell membrane. Required in cooperation with CD79A for initiation of the signal transduction cascade activated by the B-cell antigen receptor complex (BCR) which leads to internalization of the complex, trafficking to late endosomes and antigen presentation. Enhances phosphorylation of CD79A, possibly by recruiting kinases which phosphorylate CD79A or by recruiting proteins which bind to CD79A and protect it from dephosphorylation. This Homo sapiens (Human) protein is B-cell antigen receptor complex-associated protein beta chain (CD79B).